Here is a 1088-residue protein sequence, read N- to C-terminus: Neural cell adhesion molecule 1-A (1088 aa).

An N-terminal signal peptide occupies residues 1-19 (MLHIKDLIWTLYFIGTAVA). Ig-like C2-type domains lie at 20 to 108 (LEVN…GTVN), 113 to 202 (QKLT…KDIQ), 209 to 294 (PTIQ…AEAT), 303 to 397 (PKIT…FEVQ), and 400 to 484 (PKIR…HEFS). The Extracellular segment spans residues 20-705 (LEVNIVPDQG…TASAGTGLGT (686 aa)). Intrachain disulfides connect C41–C93 and C136–C186. Residue N82 is glycosylated (N-linked (GlcNAc...) asparagine). Heparin is bound by residues 149–153 (RHKGK) and 158–162 (KKDVR). N219 is a glycosylation site (N-linked (GlcNAc...) asparagine). Residues C232 and C282 are joined by a disulfide bond. 5 N-linked (GlcNAc...) asparagine glycosylation sites follow: N310, N341, N417, N443, and N472. C323 and C379 are oxidised to a cystine. C420 and C473 form a disulfide bridge. 2 consecutive Fibronectin type-III domains span residues 493-592 (TPSS…TQPV) and 594-690 (EPSA…TAKP). The helical transmembrane segment at 706–723 (GAIVGILIVIFVLLLVVV) threads the bilayer. Topologically, residues 724–1088 (DVTCFFLNKC…TQTNANESKA (365 aa)) are cytoplasmic. Residues 758 to 784 (EGKAAFSKDESKEPIVEVRTEEERTPN) are compositionally biased toward basic and acidic residues. 3 disordered regions span residues 758 to 802 (EGKA…LTEP), 829 to 1000 (FATA…DGGT), and 1024 to 1088 (VASG…ESKA). 3 stretches are compositionally biased toward low complexity: residues 835 to 847 (SPTS…TSST), 854 to 875 (APDS…APTT), and 913 to 936 (PSAA…VPPN). Residues 965 to 974 (QPSTVKNPTE) show a composition bias toward polar residues. Over residues 1046–1064 (AKTEKTQVEEKSKPEEIDV) the composition is skewed to basic and acidic residues. The segment covering 1076–1088 (NEATQTNANESKA) has biased composition (polar residues).

Post-translationally, polysialylated by ST8SIA2 and ST8SIA4. Polysialylation modulates cell interactions by confering both attractive and repulsive properties that are highly regulated by ST8SIA2 and ST8SIA4. Polysialylation is formed on a-2,3-linked sialic acid of core glycans. Expressed in neuron and in presumptive neural tissue.

It localises to the cell membrane. Functionally, this protein is a cell adhesion molecule involved in neuron-neuron adhesion, neurite fasciculation, outgrowth of neurites, etc. This is Neural cell adhesion molecule 1-A from Xenopus laevis (African clawed frog).